A 427-amino-acid chain; its full sequence is MTTGRLSMAEILEIFTATGQHPLKFTAYDGSTAGQDDATLGLDLRTPRGATYLATAPGELGLARAYVSGDLQAHGVHPGDPYELLKTLTERVDFKRPSARVLANVVRSIGVEHILPIAPPPQEARPRWRRMANGLLHSKTRDAEAIHHHYDVSNNFYEWVLGPSMTYTCAVFPNAEASLEQAQENKYRLIFEKLRLEPGDRLLDVGCGWGGMVRYAARRGVRVIGATLSAEQAKWGQKAVEDEGLSDLAQVRHSDYRDVAETGFDAVSSIGLTEHIGVKNYPFYFGFLKSKLRTGGLLLNHCITRHDNRSTSFAGGFTDRYVFPDGELTGSGRITTEIQQVGLEVLHEENFRHHYAMTLRDWCGNLVEHWDDAVAEVGLPTAKVWGLYMAASRVAFERNNLQLHHVLATKVDPRGDDSLPLRPWWQP.

S-adenosyl-L-methionine is bound by residues 167–168, 202–210, and 227–232; these read YT, LLDVGCGWG, and TLSAEQ.

The protein belongs to the CFA/CMAS family.

Functionally, may be a S-adenosylmethionine-dependent methyltransferase involved in fatty acid metabolism. The protein is Probable fatty acid methyltransferase Rv3720 of Mycobacterium tuberculosis (strain ATCC 25618 / H37Rv).